The chain runs to 547 residues: Chaperonin GroEL (547 aa).

Residues 30–33 (TLGP), 87–91 (DGTTT), Gly414, 478–480 (DAL), and Asp494 each bind ATP.

The protein belongs to the chaperonin (HSP60) family. In terms of assembly, forms a cylinder of 14 subunits composed of two heptameric rings stacked back-to-back. Interacts with the co-chaperonin GroES.

It is found in the cytoplasm. The enzyme catalyses ATP + H2O + a folded polypeptide = ADP + phosphate + an unfolded polypeptide.. Functionally, together with its co-chaperonin GroES, plays an essential role in assisting protein folding. The GroEL-GroES system forms a nano-cage that allows encapsulation of the non-native substrate proteins and provides a physical environment optimized to promote and accelerate protein folding. The protein is Chaperonin GroEL of Desulforudis audaxviator (strain MP104C).